The sequence spans 290 residues: Metallo-beta-lactamase L1 type 3 (290 aa).

Positions 1-21 are cleaved as a signal peptide; the sequence is MRSTLLAFALAVALPAAHTSA. Positions 22 to 33 are excised as a propeptide; sequence AEVPLPQLRAYT. Zn(2+) is bound by residues His105, His107, Asp109, His110, and His181. Asp205 is a binding site for substrate. A disulfide bridge links Cys239 with Cys267. Position 246 (His246) interacts with Zn(2+).

This sequence belongs to the metallo-beta-lactamase superfamily. Class-B beta-lactamase family. In terms of assembly, homotetramer. Zn(2+) is required as a cofactor.

It localises to the periplasm. It catalyses the reaction a beta-lactam + H2O = a substituted beta-amino acid. Its activity is regulated as follows. Inhibited by Hg(2+) or Cu(2+), and by chelating agents such as EDTA and O-phenanthroline. Reduced enzymatic activity in presence of cobalt, nickel, cadmium, and manganese. Confers resistance to the different beta-lactams antibiotics (penicillin, cephalosporin and carbapenem) via the hydrolysis of the beta-lactam ring. This chain is Metallo-beta-lactamase L1 type 3, found in Stenotrophomonas maltophilia (Pseudomonas maltophilia).